We begin with the raw amino-acid sequence, 284 residues long: 4-hydroxybenzoate octaprenyltransferase (284 aa).

The next 7 helical transmembrane spans lie at 33 to 53 (VIAA…LGVF), 93 to 113 (IGLF…MNPL), 136 to 156 (HIPQ…AWAA), 159 to 179 (GELP…TIAY), 209 to 229 (LIIG…GQFY), 235 to 252 (YYWT…QQHL), and 264 to 284 (AFLN…VAFW).

It belongs to the UbiA prenyltransferase family. It depends on Mg(2+) as a cofactor.

It is found in the cell inner membrane. The enzyme catalyses all-trans-octaprenyl diphosphate + 4-hydroxybenzoate = 4-hydroxy-3-(all-trans-octaprenyl)benzoate + diphosphate. Its pathway is cofactor biosynthesis; ubiquinone biosynthesis. Catalyzes the prenylation of para-hydroxybenzoate (PHB) with an all-trans polyprenyl group. Mediates the second step in the final reaction sequence of ubiquinone-8 (UQ-8) biosynthesis, which is the condensation of the polyisoprenoid side chain with PHB, generating the first membrane-bound Q intermediate 3-octaprenyl-4-hydroxybenzoate. This chain is 4-hydroxybenzoate octaprenyltransferase, found in Vibrio parahaemolyticus serotype O3:K6 (strain RIMD 2210633).